The following is a 273-amino-acid chain: Dermonecrotic toxin LapSicTox-alphaIB1b3 (273 aa).

The active site involves His5. Mg(2+)-binding residues include Glu25 and Asp27. The Nucleophile role is filled by His41. 2 disulfides stabilise this stretch: Cys45–Cys51 and Cys47–Cys190. Residue Asp85 participates in Mg(2+) binding. The N-linked (GlcNAc...) asparagine glycan is linked to Asn250.

The protein belongs to the arthropod phospholipase D family. Class II subfamily. Mg(2+) serves as cofactor. In terms of tissue distribution, expressed by the venom gland.

It is found in the secreted. It catalyses the reaction an N-(acyl)-sphingosylphosphocholine = an N-(acyl)-sphingosyl-1,3-cyclic phosphate + choline. It carries out the reaction an N-(acyl)-sphingosylphosphoethanolamine = an N-(acyl)-sphingosyl-1,3-cyclic phosphate + ethanolamine. The catalysed reaction is a 1-acyl-sn-glycero-3-phosphocholine = a 1-acyl-sn-glycero-2,3-cyclic phosphate + choline. The enzyme catalyses a 1-acyl-sn-glycero-3-phosphoethanolamine = a 1-acyl-sn-glycero-2,3-cyclic phosphate + ethanolamine. Its function is as follows. Dermonecrotic toxins cleave the phosphodiester linkage between the phosphate and headgroup of certain phospholipids (sphingolipid and lysolipid substrates), forming an alcohol (often choline) and a cyclic phosphate. This toxin acts on sphingomyelin (SM). It may also act on ceramide phosphoethanolamine (CPE), lysophosphatidylcholine (LPC) and lysophosphatidylethanolamine (LPE), but not on lysophosphatidylserine (LPS), and lysophosphatidylglycerol (LPG). It acts by transphosphatidylation, releasing exclusively cyclic phosphate products as second products. Induces dermonecrosis, hemolysis, increased vascular permeability, edema, inflammatory response, and platelet aggregation. The protein is Dermonecrotic toxin LapSicTox-alphaIB1b3 of Loxosceles apachea (Apache recluse spider).